The chain runs to 180 residues: HTH-type transcriptional regulator EcpR (180 aa).

The HTH luxR-type domain maps to 122–180; the sequence is KDIKKDKITDREMKIIRMTAQGMQPKSIARIENCSVKTVYTHRRNAEAKLYSKIYKLVQ. The segment at residues 146-165 is a DNA-binding region (H-T-H motif); that stretch reads PKSIARIENCSVKTVYTHRR.

It belongs to the EcpR/MatA family.

The protein localises to the cytoplasm. In terms of biological role, part of the ecpRABCDE operon, which encodes the E.coli common pilus (ECP). ECP plays a dual role in early-stage biofilm development and host cell recognition. Positively regulates the expression of the ecp operon. The chain is HTH-type transcriptional regulator EcpR (ecpR) from Klebsiella pneumoniae subsp. pneumoniae (strain ATCC 700721 / MGH 78578).